The following is a 219-amino-acid chain: Endonuclease III (219 aa).

One can recognise a HhH domain in the interval 109–128 (RDELVKLPGVGRKTANVVVS). [4Fe-4S] cluster contacts are provided by cysteine 189, cysteine 196, cysteine 199, and cysteine 205.

This sequence belongs to the Nth/MutY family. Requires [4Fe-4S] cluster as cofactor.

The catalysed reaction is 2'-deoxyribonucleotide-(2'-deoxyribose 5'-phosphate)-2'-deoxyribonucleotide-DNA = a 3'-end 2'-deoxyribonucleotide-(2,3-dehydro-2,3-deoxyribose 5'-phosphate)-DNA + a 5'-end 5'-phospho-2'-deoxyribonucleoside-DNA + H(+). In terms of biological role, DNA repair enzyme that has both DNA N-glycosylase activity and AP-lyase activity. The DNA N-glycosylase activity releases various damaged pyrimidines from DNA by cleaving the N-glycosidic bond, leaving an AP (apurinic/apyrimidinic) site. The AP-lyase activity cleaves the phosphodiester bond 3' to the AP site by a beta-elimination, leaving a 3'-terminal unsaturated sugar and a product with a terminal 5'-phosphate. The sequence is that of Endonuclease III from Bacillus subtilis (strain 168).